Consider the following 361-residue polypeptide: DNA replication and repair protein RecF (361 aa).

Residue 30–37 (GQNAQGKT) participates in ATP binding.

The protein belongs to the RecF family.

The protein localises to the cytoplasm. In terms of biological role, the RecF protein is involved in DNA metabolism; it is required for DNA replication and normal SOS inducibility. RecF binds preferentially to single-stranded, linear DNA. It also seems to bind ATP. This Streptococcus gordonii (strain Challis / ATCC 35105 / BCRC 15272 / CH1 / DL1 / V288) protein is DNA replication and repair protein RecF.